We begin with the raw amino-acid sequence, 149 residues long: Small ribosomal subunit protein uS13 (149 aa).

Belongs to the universal ribosomal protein uS13 family. As to quaternary structure, part of the 30S ribosomal subunit. Forms a loose heterodimer with protein S19. Forms two bridges to the 50S subunit in the 70S ribosome.

Functionally, located at the top of the head of the 30S subunit, it contacts several helices of the 16S rRNA. In the 70S ribosome it contacts the 23S rRNA (bridge B1a) and protein L5 of the 50S subunit (bridge B1b), connecting the 2 subunits; these bridges are implicated in subunit movement. The polypeptide is Small ribosomal subunit protein uS13 (Methanococcus maripaludis (strain DSM 14266 / JCM 13030 / NBRC 101832 / S2 / LL)).